Consider the following 370-residue polypeptide: tRNA (guanine(9)-/adenine(9)-N1)-methyltransferase (370 aa).

In terms of domain architecture, SAM-dependent MTase TRM10-type spans 87 to 292 (TPEELREKLP…KELPKRATRY (206 aa)).

This sequence belongs to the class IV-like SAM-binding methyltransferase superfamily. TRM10 family.

It is found in the cytoplasm. The enzyme catalyses adenosine(9) in tRNA + S-adenosyl-L-methionine = N(1)-methyladenosine(9) in tRNA + S-adenosyl-L-homocysteine + H(+). It carries out the reaction guanosine(9) in tRNA + S-adenosyl-L-methionine = N(1)-methylguanosine(9) in tRNA + S-adenosyl-L-homocysteine + H(+). Its function is as follows. Catalyzes the S-adenosyl-L-methionine-dependent formation of either N(1)-methyladenine or N(1)-methylguanine at position 9 (m1A9 or m1G9) in tRNA. The polypeptide is tRNA (guanine(9)-/adenine(9)-N1)-methyltransferase (Thermococcus kodakarensis (strain ATCC BAA-918 / JCM 12380 / KOD1) (Pyrococcus kodakaraensis (strain KOD1))).